The sequence spans 232 residues: 5'-methylthioadenosine/S-adenosylhomocysteine nucleosidase (232 aa).

Glu12 (proton acceptor) is an active-site residue. Residues Gly78, Ile152, and Met173–Glu174 contribute to the substrate site. The active-site Proton donor is Asp197.

It belongs to the PNP/UDP phosphorylase family. MtnN subfamily. In terms of assembly, homodimer.

It carries out the reaction S-adenosyl-L-homocysteine + H2O = S-(5-deoxy-D-ribos-5-yl)-L-homocysteine + adenine. The enzyme catalyses S-methyl-5'-thioadenosine + H2O = 5-(methylsulfanyl)-D-ribose + adenine. It catalyses the reaction 5'-deoxyadenosine + H2O = 5-deoxy-D-ribose + adenine. It participates in amino-acid biosynthesis; L-methionine biosynthesis via salvage pathway; S-methyl-5-thio-alpha-D-ribose 1-phosphate from S-methyl-5'-thioadenosine (hydrolase route): step 1/2. Its function is as follows. Catalyzes the irreversible cleavage of the glycosidic bond in both 5'-methylthioadenosine (MTA) and S-adenosylhomocysteine (SAH/AdoHcy) to adenine and the corresponding thioribose, 5'-methylthioribose and S-ribosylhomocysteine, respectively. Also cleaves 5'-deoxyadenosine, a toxic by-product of radical S-adenosylmethionine (SAM) enzymes, into 5-deoxyribose and adenine. Thus, is required for in vivo function of the radical SAM enzymes biotin synthase and lipoic acid synthase, that are inhibited by 5'-deoxyadenosine accumulation. The protein is 5'-methylthioadenosine/S-adenosylhomocysteine nucleosidase of Edwardsiella ictaluri (strain 93-146).